A 31-amino-acid chain; its full sequence is Photosystem II reaction center protein T (31 aa).

Residues 3 to 23 (AFTYTLLMTLGVVTLFFAVAF) traverse the membrane as a helical segment.

This sequence belongs to the PsbT family. In terms of assembly, PSII is composed of 1 copy each of membrane proteins PsbA, PsbB, PsbC, PsbD, PsbE, PsbF, PsbH, PsbI, PsbJ, PsbK, PsbL, PsbM, PsbT, PsbX, PsbY, Psb30/Ycf12, peripheral proteins PsbO, CyanoQ (PsbQ), PsbU, PsbV and a large number of cofactors. It forms dimeric complexes.

It localises to the cellular thylakoid membrane. In terms of biological role, found at the monomer-monomer interface of the photosystem II (PS II) dimer, plays a role in assembly and dimerization of PSII. PSII is a light-driven water plastoquinone oxidoreductase, using light energy to abstract electrons from H(2)O, generating a proton gradient subsequently used for ATP formation. The polypeptide is Photosystem II reaction center protein T (Prochlorococcus marinus (strain SARG / CCMP1375 / SS120)).